We begin with the raw amino-acid sequence, 434 residues long: Nicotinate phosphoribosyltransferase (434 aa).

Position 242 is a phosphohistidine; by autocatalysis (His-242).

It belongs to the NAPRTase family. Transiently phosphorylated on a His residue during the reaction cycle. Phosphorylation strongly increases the affinity for substrates and increases the rate of nicotinate D-ribonucleotide production. Dephosphorylation regenerates the low-affinity form of the enzyme, leading to product release.

It carries out the reaction nicotinate + 5-phospho-alpha-D-ribose 1-diphosphate + ATP + H2O = nicotinate beta-D-ribonucleotide + ADP + phosphate + diphosphate. It functions in the pathway cofactor biosynthesis; NAD(+) biosynthesis; nicotinate D-ribonucleotide from nicotinate: step 1/1. In terms of biological role, catalyzes the synthesis of beta-nicotinate D-ribonucleotide from nicotinate and 5-phospho-D-ribose 1-phosphate at the expense of ATP. In Allorhizobium ampelinum (strain ATCC BAA-846 / DSM 112012 / S4) (Agrobacterium vitis (strain S4)), this protein is Nicotinate phosphoribosyltransferase.